A 377-amino-acid polypeptide reads, in one-letter code: Fructose-bisphosphate aldolase 1, chloroplastic (377 aa).

2 residues coordinate substrate: Arg74 and Lys164. Glu204 (proton acceptor) is an active-site residue. Residue Lys246 is the Schiff-base intermediate with dihydroxyacetone-P of the active site.

The protein belongs to the class I fructose-bisphosphate aldolase family.

It localises to the plastid. It is found in the chloroplast. The enzyme catalyses beta-D-fructose 1,6-bisphosphate = D-glyceraldehyde 3-phosphate + dihydroxyacetone phosphate. Its pathway is carbohydrate degradation; glycolysis; D-glyceraldehyde 3-phosphate and glycerone phosphate from D-glucose: step 4/4. The polypeptide is Fructose-bisphosphate aldolase 1, chloroplastic (ALDCHL) (Chlamydomonas reinhardtii (Chlamydomonas smithii)).